The sequence spans 334 residues: Kihadalactone A synthase LFS (334 aa).

The Fe2OG dioxygenase domain occupies K181–P286. H208, D210, and H269 together coordinate Fe cation. R277 is a 2-oxoglutarate binding site.

Belongs to the iron/ascorbate-dependent oxidoreductase family. The cofactor is Fe(2+). In terms of tissue distribution, expressed in maturing fruits and in juice vesicles.

The catalysed reaction is (1R,2R,3S,8R,10R,11R,15S,16S)-3-(acetyloxy)-15-(1-hydroxy-4-oxobutan-2-yl)-2,7,7,11,16-pentamethyl-5-oxo-6-oxatetracyclo[9.7.0.0(2,8).0(12,16)]octadec-12-en-10-yl acetate + 2-oxoglutarate + O2 = kihadalactone A + succinate + CO2 + 2 H2O. It functions in the pathway secondary metabolite biosynthesis; terpenoid biosynthesis. Functionally, 2-oxoglutarate-Fe(II) type oxidoreductase involved in the biosynthesis of limonoids triterpene natural products such as limonin, a compound with insecticidal activity responsible for the bitter taste in citrus. Catalyzes the formation of kihadalactone A. This Citrus sinensis (Sweet orange) protein is Kihadalactone A synthase LFS.